Consider the following 192-residue polypeptide: 3-hydroxyanthranilate 3,4-dioxygenase (192 aa).

Arg50 lines the O2 pocket. Residues His54, Glu60, and His102 each contribute to the Fe cation site. A substrate-binding site is contributed by Glu60. Positions 106 and 116 each coordinate substrate. Positions 131, 134, 168, and 171 each coordinate a divalent metal cation.

Belongs to the 3-HAO family. Requires Fe(2+) as cofactor.

It localises to the cytoplasm. The catalysed reaction is 3-hydroxyanthranilate + O2 = (2Z,4Z)-2-amino-3-carboxymuconate 6-semialdehyde. The protein operates within cofactor biosynthesis; NAD(+) biosynthesis; quinolinate from L-kynurenine: step 3/3. Functionally, catalyzes the oxidative ring opening of 3-hydroxyanthranilate to 2-amino-3-carboxymuconate semialdehyde, which spontaneously cyclizes to quinolinate. This Coccidioides immitis (strain RS) (Valley fever fungus) protein is 3-hydroxyanthranilate 3,4-dioxygenase.